The chain runs to 202 residues: Large ribosomal subunit protein uL18 (202 aa).

It belongs to the universal ribosomal protein uL18 family. In terms of assembly, part of the 50S ribosomal subunit. Contacts the 5S and 23S rRNAs.

Functionally, this is one of the proteins that bind and probably mediate the attachment of the 5S RNA into the large ribosomal subunit, where it forms part of the central protuberance. This is Large ribosomal subunit protein uL18 from Staphylothermus marinus (strain ATCC 43588 / DSM 3639 / JCM 9404 / F1).